The following is a 123-amino-acid chain: Large ribosomal subunit protein bL19c (123 aa).

It belongs to the bacterial ribosomal protein bL19 family.

It is found in the plastid. Its subcellular location is the chloroplast. This chain is Large ribosomal subunit protein bL19c, found in Pyropia yezoensis (Susabi-nori).